Reading from the N-terminus, the 609-residue chain is CTTNBP2 N-terminal-like protein (609 aa).

The span at 1–10 (MEQNSNSSVA) shows a compositional bias: polar residues. The disordered stretch occupies residues 1-29 (MEQNSNSSVADTFAEAPATDADYGTENCS). 2 coiled-coil regions span residues 182 to 264 (RMVN…QKQI) and 303 to 370 (IAEG…QQLG). Residues 556 to 584 (PPAGARGAPPPIPTKPIVPPKREPSLSRL) form a disordered region. Residues 563 to 574 (APPPIPTKPIVP) are compositionally biased toward pro residues. A Phosphoserine modification is found at serine 586.

Its subcellular location is the cell projection. The protein localises to the lamellipodium. The protein resides in the cytoplasm. It is found in the cytoskeleton. It localises to the stress fiber. Functionally, regulates lamellipodial actin dynamics in a Cortactin-dependent manner and is therefore likely involved in controlling actin branch density, actin-retrograde flow rates and lamellipodial protrusion. Functions by slowing the dissociation of Cortactin from Arp2/3 nucleated branches thereby increasing branch nucleation and junction stability. Associates with core striatin-interacting phosphatase and kinase (STRIPAK) complex to form CTTNBP2NL-STRIPAK complexes. STRIPAK complexes have critical roles in protein (de)phosphorylation and are regulators of multiple signaling pathways including Hippo, MAPK, nuclear receptor and cytoskeleton remodeling. Different types of STRIPAK complexes are involved in a variety of biological processes such as cell growth, differentiation, apoptosis, metabolism and immune regulation. This chain is CTTNBP2 N-terminal-like protein, found in Drosophila melanogaster (Fruit fly).